Reading from the N-terminus, the 165-residue chain is Selenoprotein F (165 aa).

The N-terminal stretch at 1–31 (MVAMAAGPSGCLVPAFGLRLLLATVLQAVSA) is a signal peptide. Residue Sec96 is a non-standard amino acid, selenocysteine.

In terms of assembly, forms a tight complex with UGGT1/UGCGL1. Interacts with UGGT2/UGCGL2. Interacts with RDH11. In terms of processing, the N-terminus is blocked. As to expression, higher levels in prostate and thyroid gland.

The protein resides in the endoplasmic reticulum lumen. Functionally, may be involved in redox reactions associated with the formation of disulfide bonds. May contribute to the quality control of protein folding in the endoplasmic reticulum. May regulate protein folding by enhancing the catalytic activity of UGGT1/UGCGL1 and UGGT2/UGCGL2. The protein is Selenoprotein F of Homo sapiens (Human).